Consider the following 688-residue polypeptide: G protein-coupled receptor kinase 3 (688 aa).

An N-terminal region spans residues Met-1 to Asp-190. The RGS domain maps to Thr-54–Cys-175. The 263-residue stretch at Phe-191 to Phe-453 folds into the Protein kinase domain. Residues Ile-197–Val-205 and Lys-220 contribute to the ATP site. Asp-317 (proton acceptor) is an active-site residue. In terms of domain architecture, AGC-kinase C-terminal spans Arg-454–Val-521. The 95-residue stretch at Asp-558–Met-652 folds into the PH domain.

This sequence belongs to the protein kinase superfamily. AGC Ser/Thr protein kinase family. GPRK subfamily. In terms of assembly, interacts with GIT1. Ubiquitinated. As to expression, ubiquitous; brain, spleen &gt; heart, lung &gt; kidney.

The protein resides in the postsynapse. It is found in the presynapse. It carries out the reaction [beta-adrenergic receptor] + ATP = [beta-adrenergic receptor]-phosphate + ADP + H(+). In terms of biological role, specifically phosphorylates the agonist-occupied form of the beta-adrenergic and closely related receptors. The chain is G protein-coupled receptor kinase 3 from Bos taurus (Bovine).